A 356-amino-acid chain; its full sequence is Butyrate kinase 2 (356 aa).

Belongs to the acetokinase family. As to quaternary structure, homodimer.

It localises to the cytoplasm. The enzyme catalyses butanoate + ATP = butanoyl phosphate + ADP. Its pathway is lipid metabolism; butanoate metabolism. Functionally, catalyzes the conversion of butyryl-CoA through butyryl phosphate to butyrate. In Clostridium acetobutylicum (strain ATCC 824 / DSM 792 / JCM 1419 / IAM 19013 / LMG 5710 / NBRC 13948 / NRRL B-527 / VKM B-1787 / 2291 / W), this protein is Butyrate kinase 2 (buk2).